The sequence spans 207 residues: Ribosome maturation factor RimP (207 aa).

The segment at 171–207 (RAPGGAPEEGEEDTTEAAPEGAGKSPKPGRRPARKTH) is disordered. Over residues 197–207 (KPGRRPARKTH) the composition is skewed to basic residues.

Belongs to the RimP family.

It localises to the cytoplasm. Its function is as follows. Required for maturation of 30S ribosomal subunits. This Gluconacetobacter diazotrophicus (strain ATCC 49037 / DSM 5601 / CCUG 37298 / CIP 103539 / LMG 7603 / PAl5) protein is Ribosome maturation factor RimP.